Consider the following 873-residue polypeptide: Protein SEY1 (873 aa).

A disordered region spans residues 1 to 20 (MVANGHFAGSADGQHSSSYE). Residues 1 to 749 (MVANGHFAGS…KRSAIGGITQ (749 aa)) lie on the Cytoplasmic side of the membrane. A GB1/RHD3-type G domain is found at 49–307 (GFNYHLISVF…IPADGFAVYA (259 aa)). 59 to 66 (GSQSTGKS) contacts GTP. Residues 482–506 (SNYQQELSLYQKDLERTSGQLRRDE) adopt a coiled-coil conformation. Positions 677 to 703 (DKWIGHTPSSATPADEEDLTPIGGVDD) are disordered. Residues 690-703 (ADEEDLTPIGGVDD) show a composition bias toward acidic residues. Residues 750–770 (VPLYFYGLLFALGWNEILAVL) traverse the membrane as a helical segment. Residues 771–773 (RNP) are Lumenal-facing. The chain crosses the membrane as a helical span at residues 774-794 (VYFLLLFVCAIGAYITYQLNL). Over 795–873 (WGPIIKMTEA…EDVDDDDDDF (79 aa)) the chain is Cytoplasmic. Residues 828–873 (RQAMAMSGARNATEEHEMSRLSRKPAERGGRKNRADEDVDDDDDDF) form a disordered region. Basic and acidic residues predominate over residues 839–863 (ATEEHEMSRLSRKPAERGGRKNRAD). The segment covering 864 to 873 (EDVDDDDDDF) has biased composition (acidic residues).

It belongs to the TRAFAC class dynamin-like GTPase superfamily. GB1/RHD3 GTPase family. RHD3 subfamily.

Its subcellular location is the endoplasmic reticulum membrane. Its function is as follows. Cooperates with the reticulon proteins and tubule-shaping DP1 family proteins to generate and maintain the structure of the tubular endoplasmic reticulum network. Has GTPase activity, which is required for its function in ER organization. The sequence is that of Protein SEY1 from Ajellomyces capsulatus (strain NAm1 / WU24) (Darling's disease fungus).